The chain runs to 490 residues: Actin-related protein 6 (490 aa).

Belongs to the actin family. ARP6 subfamily.

It localises to the cytoplasm. Its subcellular location is the cytoskeleton. The chain is Actin-related protein 6 from Dictyostelium discoideum (Social amoeba).